The following is a 776-amino-acid chain: 1,4-alpha-glucan branching enzyme GlgB (776 aa).

The active-site Nucleophile is the Asp-431. Glu-484 functions as the Proton donor in the catalytic mechanism.

This sequence belongs to the glycosyl hydrolase 13 family. GlgB subfamily. In terms of assembly, monomer.

The catalysed reaction is Transfers a segment of a (1-&gt;4)-alpha-D-glucan chain to a primary hydroxy group in a similar glucan chain.. It functions in the pathway glycan biosynthesis; glycogen biosynthesis. Functionally, catalyzes the formation of the alpha-1,6-glucosidic linkages in glycogen by scission of a 1,4-alpha-linked oligosaccharide from growing alpha-1,4-glucan chains and the subsequent attachment of the oligosaccharide to the alpha-1,6 position. The protein is 1,4-alpha-glucan branching enzyme GlgB of Trichodesmium erythraeum (strain IMS101).